Consider the following 404-residue polypeptide: Zinc metalloprotease Rip1 (404 aa).

A helical transmembrane segment spans residues 1 to 21 (MMFVTGIVLFALAILISVALH). Residue histidine 21 participates in Zn(2+) binding. Glutamate 22 is an active-site residue. Histidine 25 contacts Zn(2+). Residues 104-124 (PGMNLAICLVLIYAIALVWGL) form a helical membrane-spanning segment. The PDZ domain maps to 121 to 203 (VWGLPNLHPP…SVPIVVERDG (83 aa)). Position 202 (aspartate 202) interacts with Zn(2+). 2 consecutive transmembrane segments (helical) span residues 313–333 (LWVA…TINL) and 373–393 (LLPA…LTVT).

The protein belongs to the peptidase M50B family. Zn(2+) is required as a cofactor.

It localises to the cell membrane. Its function is as follows. A probable intramembrane site-2 protease (S2P) that cleaves type-2 transmembrane proteins within their membrane-spanning domains. Cleaves PbpB (PBP3, FtsI); cleavage is inhibited by Wag31-PbpB interaction. Probably also cleaves anti-sigma factors RskA, RslA and RsmA. In terms of biological role, regulated intramembrane proteolysis (RIP) occurs when an extracytoplasmic signal (possibly oxidative stress) triggers a concerted proteolytic cascade to transmit information and elicit cellular responses. The membrane-spanning regulatory substrate protein (includes anti-sigma factors RskA, RslA, RsmA, and PbpB in M.tuberculosis) is first cut extracytoplasmically (site-1 protease, S1P), then within the membrane itself (site-2 protease, S2P, this entry), while cytoplasmic proteases finish degrading the regulatory protein, liberating the effector protein (ECF sigma factors SigK, SigL and SigM). The protein is Zinc metalloprotease Rip1 (rip1) of Mycobacterium bovis (strain BCG / Pasteur 1173P2).